We begin with the raw amino-acid sequence, 766 residues long: Single-minded homolog 1 (766 aa).

The region spanning 1–53 is the bHLH domain; that stretch reads MKEKSKNAARTRREKENSEFYELAKLLPLPSAITSQLDKASIIRLTTSYLKMR. 2 PAS domains span residues 77–147 and 218–288; these read GREL…QPYH and PPSA…LVKG. The PAC domain maps to 292-335; it reads TKYYRFLAKHGGWVWVQSYATIVHNSRSSRPHCIVSVNYVLTDT. The Single-minded C-terminal domain occupies 336–766; the sequence is EYKGLQLSLD…GTSVIITNGS (431 aa). Residues 353–365 are compositionally biased toward polar residues; that stretch reads AFSYTSSSTPTMT. 2 disordered regions span residues 353–431 and 528–563; these read AFSY…SQHD and WDED…EPSK. Residues 368–387 carry the Nuclear localization signal motif; sequence RKGAKSRLSSSKSKSRTSPY. The span at 373 to 385 shows a compositional bias: low complexity; it reads SRLSSSKSKSRTS. Positions 394 to 404 are enriched in basic and acidic residues; that stretch reads HTERSESDHDS.

In terms of assembly, efficient DNA binding requires dimerization with another bHLH protein. Heterodimer; forms a heterodimer with ARNT, ARNT2.

It localises to the nucleus. Functionally, transcriptional factor that may have pleiotropic effects during embryogenesis and in the adult. The chain is Single-minded homolog 1 (SIM1) from Homo sapiens (Human).